The primary structure comprises 180 residues: Large ribosomal subunit protein eL18 (180 aa).

Positions 152 to 180 (FGPAPGVPGSHTKPYVISKSRERTNAHRA) are disordered. A compositionally biased stretch (basic and acidic residues) spans 170–180 (KSRERTNAHRA).

It belongs to the eukaryotic ribosomal protein eL18 family.

The protein localises to the cytoplasm. In Taenia asiatica (Asian tapeworm), this protein is Large ribosomal subunit protein eL18 (RPL18).